Consider the following 132-residue polypeptide: Small ribosomal subunit protein uS8 (132 aa).

It belongs to the universal ribosomal protein uS8 family. Part of the 30S ribosomal subunit. Contacts proteins S5 and S12.

One of the primary rRNA binding proteins, it binds directly to 16S rRNA central domain where it helps coordinate assembly of the platform of the 30S subunit. In Borrelia hermsii (strain HS1 / DAH), this protein is Small ribosomal subunit protein uS8.